The following is a 373-amino-acid chain: MELNYYEILEISQTSDKETIKKAYRKMALKYHPDRNQGDKEAEEKFKLVNEAYEVLSNDEKRSIYDRYGKEGLKGQAGGFGGFGDVDLGDIFSSFFGDGFGFGSSTRKKEKGNKYPQDLKITTKISFKEAVFGCKKKIDFSYKSFCKSCKGSGSENGKLDTCPHCGGKGQVGVRQGFMTFVQSCDHCKGSGQIIKDKCKTCHGNGYEEIKDHIELDIPEGIDSGMSLRVQNKANELPNSSQRGDLYIKIIVEDDDKFIRHDDDIYTIVPVFFTQAALGKTIKVSTIRGEADLKLPVGAKDKQKFELTNEGVKNIHNGKLGSHIVQIEIKFPKNLTDEQKNLLLQLEKSFGLADEEAFIEQESLFDKIKSWFSH.

Positions 4–69 constitute a J domain; it reads NYYEILEISQ…EKRSIYDRYG (66 aa). The CR-type zinc finger occupies 133–210; it reads GCKKKIDFSY…CHGNGYEEIK (78 aa). Zn(2+) is bound by residues Cys-146, Cys-149, Cys-162, Cys-165, Cys-184, Cys-187, Cys-198, and Cys-201. CXXCXGXG motif repeat units lie at residues 146-153, 162-169, 184-191, and 198-205; these read CKSCKGSG, CPHCGGKG, CDHCKGSG, and CKTCHGNG.

It belongs to the DnaJ family. In terms of assembly, homodimer. It depends on Zn(2+) as a cofactor.

The protein localises to the cytoplasm. In terms of biological role, participates actively in the response to hyperosmotic and heat shock by preventing the aggregation of stress-denatured proteins and by disaggregating proteins, also in an autonomous, DnaK-independent fashion. Unfolded proteins bind initially to DnaJ; upon interaction with the DnaJ-bound protein, DnaK hydrolyzes its bound ATP, resulting in the formation of a stable complex. GrpE releases ADP from DnaK; ATP binding to DnaK triggers the release of the substrate protein, thus completing the reaction cycle. Several rounds of ATP-dependent interactions between DnaJ, DnaK and GrpE are required for fully efficient folding. Also involved, together with DnaK and GrpE, in the DNA replication of plasmids through activation of initiation proteins. This Campylobacter lari (strain RM2100 / D67 / ATCC BAA-1060) protein is Chaperone protein DnaJ.